A 289-amino-acid chain; its full sequence is tRNA pseudouridine synthase B (289 aa).

Asp-38 (nucleophile) is an active-site residue.

The protein belongs to the pseudouridine synthase TruB family. Type 1 subfamily.

The catalysed reaction is uridine(55) in tRNA = pseudouridine(55) in tRNA. Responsible for synthesis of pseudouridine from uracil-55 in the psi GC loop of transfer RNAs. In Clostridium novyi (strain NT), this protein is tRNA pseudouridine synthase B.